Here is a 355-residue protein sequence, read N- to C-terminus: Homeobox protein knotted-1-like LET6 (355 aa).

Residues 75 to 96 (PFMDNNNNNNPQEDNNSSSSSI) are disordered. A compositionally biased stretch (low complexity) spans 79-96 (NNNNNNPQEDNNSSSSSI). One can recognise an ELK domain in the interval 237–257 (ELKGQLLRKYSGYLGSLKQEF). The homeobox; TALE-type DNA-binding region spans 258 to 321 (MKKRKKGKLP…NQRKRHWKPS (64 aa)).

The protein belongs to the TALE/KNOX homeobox family. In terms of tissue distribution, expressed in developing lateral organs and developing ovaries in flowers.

It localises to the nucleus. May have a role to play in formative events in ovule and embryo morphogenesis. Probably binds to the DNA sequence 5'-TGAC-3'. The polypeptide is Homeobox protein knotted-1-like LET6 (LET6) (Solanum lycopersicum (Tomato)).